The primary structure comprises 331 residues: Glycerol-3-phosphate dehydrogenase [NAD(P)+] (331 aa).

NADPH contacts are provided by Trp-11, Arg-30, and Lys-105. Sn-glycerol 3-phosphate is bound by residues Lys-105, Gly-134, and Ser-136. Ala-138 is an NADPH binding site. 5 residues coordinate sn-glycerol 3-phosphate: Lys-189, Asp-242, Ser-252, Arg-253, and Asn-254. Catalysis depends on Lys-189, which acts as the Proton acceptor. Position 253 (Arg-253) interacts with NADPH. NADPH is bound by residues Val-277 and Glu-279.

The protein belongs to the NAD-dependent glycerol-3-phosphate dehydrogenase family.

The protein localises to the cytoplasm. The catalysed reaction is sn-glycerol 3-phosphate + NAD(+) = dihydroxyacetone phosphate + NADH + H(+). It carries out the reaction sn-glycerol 3-phosphate + NADP(+) = dihydroxyacetone phosphate + NADPH + H(+). The protein operates within membrane lipid metabolism; glycerophospholipid metabolism. In terms of biological role, catalyzes the reduction of the glycolytic intermediate dihydroxyacetone phosphate (DHAP) to sn-glycerol 3-phosphate (G3P), the key precursor for phospholipid synthesis. This is Glycerol-3-phosphate dehydrogenase [NAD(P)+] from Herminiimonas arsenicoxydans.